A 29-amino-acid polypeptide reads, in one-letter code: Cyclotide vibi-C (29 aa).

The cyclopeptide (Gly-Asn) cross-link spans 1–29 (GLPVCGETCAFGSCYTPGCSCSWPVCTRN). Disulfide bonds link Cys5-Cys19, Cys9-Cys21, and Cys14-Cys26.

Post-translationally, this is a cyclic peptide.

Probably participates in a plant defense mechanism. This chain is Cyclotide vibi-C, found in Viola biflora (Yellow wood violet).